The chain runs to 252 residues: Orotidine 5'-phosphate decarboxylase (252 aa).

Residues aspartate 24, lysine 46, aspartate 73–threonine 82, threonine 137, arginine 199, glutamine 208, glycine 228, and arginine 229 each bind substrate. Lysine 75 serves as the catalytic Proton donor.

The protein belongs to the OMP decarboxylase family. Type 1 subfamily. In terms of assembly, homodimer.

It carries out the reaction orotidine 5'-phosphate + H(+) = UMP + CO2. It functions in the pathway pyrimidine metabolism; UMP biosynthesis via de novo pathway; UMP from orotate: step 2/2. Its function is as follows. Catalyzes the decarboxylation of orotidine 5'-monophosphate (OMP) to uridine 5'-monophosphate (UMP). This Moorella thermoacetica (strain ATCC 39073 / JCM 9320) protein is Orotidine 5'-phosphate decarboxylase.